The primary structure comprises 105 residues: ELVSEFCLKKERVCEDSSLTISCPEGEGIVIYDAIYGRKRGEVCPGLFGAFTKNRKCRSSNSQQVVENSCEGKSSCTVLASNSVFGDPCPGTAKYLAVTYICSFL.

In terms of domain architecture, SUEL-type lectin spans 13 to 103 (VCEDSSLTIS…KYLAVTYICS (91 aa)).

As to quaternary structure, homodimer; disulfide-linked.

The protein resides in the cytoplasm. Its function is as follows. This protein binds D-galactoside. May have an important role in the activation of eggs (triggered by fertilization), or in their subsequent differentiation. The dimeric form is essential for hemagglutination activity. The chain is D-galactoside-specific lectin from Heliocidaris crassispina (Sea urchin).